The following is a 591-amino-acid chain: Trihelix transcription factor PTL (591 aa).

Residues 1 to 32 form a disordered region; it reads MDQDQHPQYGIPELRQLMKGGGRTTTTTPSTS. The region spanning 118 to 177 is the Myb-like 1 domain; the sequence is GRWPRQETLTLLEIRSRLDHKFKEANQKGPLWDEVSRIMSEEHGYQRSGKKCREKFENLY. The interval 380 to 410 is disordered; the sequence is CSSPEERTNGNNEIRNNSETQNENGSDQTMT. Residues 388–410 show a composition bias toward polar residues; the sequence is NGNNEIRNNSETQNENGSDQTMT. In terms of domain architecture, Myb-like 2 spans 422–479; sequence WGEQEILKLMEIRTSMDSTFQEILGGCSDEFLWEEIAAKLIQLGFDQRSALLCKEKWE. The segment at 491–551 is disordered; that stretch reads QINKKRKDNS…SNANANANVT (61 aa). Over residues 515–534 the composition is skewed to polar residues; that stretch reads IYNNRESGYNDNDPHQINEQ. Positions 535 to 551 are enriched in low complexity; sequence GNVGSSTSNANANANVT.

In terms of assembly, interacts with KIN10. Confined to flowers, at low levels. Also present in 7-days-old seedlings. Barely detectable in other tissues such as young seedlings, roots, stems, leaves and siliques. Expressed in flower primordia, more precisely between newly arisen sepal primordia and also at the basal margins of developing sepals.

The protein localises to the nucleus. Transcription factor that prevents growth. Regulates perianth architecture in flower, mostly in the second whorl, probably by suppressing growth between initiating sepals, ensuring that they remain separate, and by modulating organ shapes. Required for the establishment of auxin flux. This Arabidopsis thaliana (Mouse-ear cress) protein is Trihelix transcription factor PTL (PTL).